Reading from the N-terminus, the 455-residue chain is F-box/FBD/LRR-repeat protein At3g51530 (455 aa).

The segment at 1 to 26 (MKNSERFSAAKPLMEQGGKSSRKPGF) is disordered. One can recognise an F-box domain in the interval 29 to 75 (EDRISELPEVLLLQILSSLPTKLVISTSVLSKRWLSLWKMVQRLEFE). LRR repeat units lie at residues 80–106 (IYDF…HLKV), 155–182 (ETLK…HLLS), 183–208 (VVYK…VLRR), 227–257 (TLLL…GIES), 277–302 (IRNV…SLDL), and 325–351 (THKV…KLID). The FBD domain maps to 370-417 (KWNQPKYVPECLETFMWRNCNWGREEEKEVATYILRNARQLKKATFST).

This chain is F-box/FBD/LRR-repeat protein At3g51530, found in Arabidopsis thaliana (Mouse-ear cress).